A 168-amino-acid polypeptide reads, in one-letter code: Transcription antitermination protein NusB (168 aa).

It belongs to the NusB family.

In terms of biological role, involved in transcription antitermination. Required for transcription of ribosomal RNA (rRNA) genes. Binds specifically to the boxA antiterminator sequence of the ribosomal RNA (rrn) operons. This Chlamydia trachomatis serovar D (strain ATCC VR-885 / DSM 19411 / UW-3/Cx) protein is Transcription antitermination protein NusB.